The following is a 130-amino-acid chain: Ribonuclease VapC22 (130 aa).

The 116-residue stretch at 4-119 (VLLDSHVAYW…RLVTKDRRLR (116 aa)) folds into the PINc domain. Mg(2+)-binding residues include Asp-7 and Asp-97.

This sequence belongs to the PINc/VapC protein family. Mg(2+) is required as a cofactor.

The protein resides in the secreted. Toxic component of a type II toxin-antitoxin (TA) system. An RNase. Upon expression in M.smegmatis inhibits translation and colony formation. Its toxic effect on colony formation is neutralized by coexpression with cognate antitoxin VapB22; the effect on translation has not been tested but is probably neutralized also. This chain is Ribonuclease VapC22, found in Mycobacterium tuberculosis (strain ATCC 25618 / H37Rv).